The primary structure comprises 110 residues: Large ribosomal subunit protein uL22 (110 aa).

This sequence belongs to the universal ribosomal protein uL22 family. As to quaternary structure, part of the 50S ribosomal subunit.

This protein binds specifically to 23S rRNA; its binding is stimulated by other ribosomal proteins, e.g. L4, L17, and L20. It is important during the early stages of 50S assembly. It makes multiple contacts with different domains of the 23S rRNA in the assembled 50S subunit and ribosome. In terms of biological role, the globular domain of the protein is located near the polypeptide exit tunnel on the outside of the subunit, while an extended beta-hairpin is found that lines the wall of the exit tunnel in the center of the 70S ribosome. The polypeptide is Large ribosomal subunit protein uL22 (Yersinia enterocolitica serotype O:8 / biotype 1B (strain NCTC 13174 / 8081)).